The following is a 688-amino-acid chain: Protein sel-1 homolog 2 (688 aa).

An N-terminal signal peptide occupies residues 1–23; the sequence is MKPLSLLIEILIILGVTIKTIKA. At 24-662 the chain is on the extracellular side; sequence EEHNKRQKER…RWNWLKLDNT (639 aa). Residue Asn-34 is glycosylated (N-linked (GlcNAc...) asparagine). Sel1-like repeat units follow at residues 107-142, 143-178, 179-214, 215-250, 297-333, 334-370, 371-406, 407-442, 443-478, 551-586, and 588-623; these read GDQL…DMGN, LKAM…KEGS, CKAQ…AGGN, MMSQ…DYIA, VQIQ…KAGS, ANAM…SKGN, AIGL…EKGW, PDAQ…QSGQ, PLAI…ELGH, AFAR…NKYH, and AQAM…QTSP. Residues 663-683 form a helical membrane-spanning segment; that stretch reads IGPHWDLFVIGLIVPGLILLL. At 684–688 the chain is on the cytoplasmic side; sequence RNHHG.

It belongs to the sel-1 family.

It is found in the membrane. The protein resides in the cell projection. It localises to the cilium. The protein localises to the nucleus speckle. The sequence is that of Protein sel-1 homolog 2 (SEL1L2) from Homo sapiens (Human).